The primary structure comprises 75 residues: 8.9 kDa basic protein (75 aa).

In Orgyia pseudotsugata (Douglas-fir tussock moth), this protein is 8.9 kDa basic protein (P8.9).